The chain runs to 161 residues: NAD(P)H-quinone oxidoreductase subunit I, chloroplastic (161 aa).

4Fe-4S ferredoxin-type domains are found at residues 55 to 84 (GRIH…VDWK) and 95 to 124 (LNYS…MTEE). The [4Fe-4S] cluster site is built by Cys64, Cys67, Cys70, Cys74, Cys104, Cys107, Cys110, and Cys114.

The protein belongs to the complex I 23 kDa subunit family. NDH is composed of at least 16 different subunits, 5 of which are encoded in the nucleus. The cofactor is [4Fe-4S] cluster.

The protein resides in the plastid. The protein localises to the chloroplast thylakoid membrane. It carries out the reaction a plastoquinone + NADH + (n+1) H(+)(in) = a plastoquinol + NAD(+) + n H(+)(out). It catalyses the reaction a plastoquinone + NADPH + (n+1) H(+)(in) = a plastoquinol + NADP(+) + n H(+)(out). NDH shuttles electrons from NAD(P)H:plastoquinone, via FMN and iron-sulfur (Fe-S) centers, to quinones in the photosynthetic chain and possibly in a chloroplast respiratory chain. The immediate electron acceptor for the enzyme in this species is believed to be plastoquinone. Couples the redox reaction to proton translocation, and thus conserves the redox energy in a proton gradient. This chain is NAD(P)H-quinone oxidoreductase subunit I, chloroplastic, found in Lotus japonicus (Lotus corniculatus var. japonicus).